The sequence spans 530 residues: Phosphoenolpyruvate carboxykinase (ATP) (530 aa).

Residues Arg-57, Tyr-193, and Lys-199 each contribute to the substrate site. ATP contacts are provided by residues Lys-199, His-218, and 234–242 (GLSGTGKTT). The Mn(2+) site is built by Lys-199 and His-218. Asp-255 is a binding site for Mn(2+). Glu-283, Arg-320, and Thr-445 together coordinate ATP. Residue Arg-320 coordinates substrate.

The protein belongs to the phosphoenolpyruvate carboxykinase (ATP) family. Mn(2+) is required as a cofactor.

The protein resides in the cytoplasm. The enzyme catalyses oxaloacetate + ATP = phosphoenolpyruvate + ADP + CO2. It participates in carbohydrate biosynthesis; gluconeogenesis. Functionally, involved in the gluconeogenesis. Catalyzes the conversion of oxaloacetate (OAA) to phosphoenolpyruvate (PEP) through direct phosphoryl transfer between the nucleoside triphosphate and OAA. This Leptospira biflexa serovar Patoc (strain Patoc 1 / Ames) protein is Phosphoenolpyruvate carboxykinase (ATP).